The sequence spans 425 residues: Serine--tRNA ligase (425 aa).

231-233 (TAE) provides a ligand contact to L-serine. 262 to 264 (RSE) is an ATP binding site. L-serine is bound at residue Glu285. 349 to 352 (EISS) serves as a coordination point for ATP. Ser385 contacts L-serine.

The protein belongs to the class-II aminoacyl-tRNA synthetase family. Type-1 seryl-tRNA synthetase subfamily. In terms of assembly, homodimer. The tRNA molecule binds across the dimer.

It is found in the cytoplasm. The catalysed reaction is tRNA(Ser) + L-serine + ATP = L-seryl-tRNA(Ser) + AMP + diphosphate + H(+). The enzyme catalyses tRNA(Sec) + L-serine + ATP = L-seryl-tRNA(Sec) + AMP + diphosphate + H(+). It participates in aminoacyl-tRNA biosynthesis; selenocysteinyl-tRNA(Sec) biosynthesis; L-seryl-tRNA(Sec) from L-serine and tRNA(Sec): step 1/1. In terms of biological role, catalyzes the attachment of serine to tRNA(Ser). Is also able to aminoacylate tRNA(Sec) with serine, to form the misacylated tRNA L-seryl-tRNA(Sec), which will be further converted into selenocysteinyl-tRNA(Sec). The chain is Serine--tRNA ligase from Bartonella tribocorum (strain CIP 105476 / IBS 506).